Reading from the N-terminus, the 507-residue chain is Hippocampus abundant transcript-like protein 1 (507 aa).

Positions 1–22 are disordered; that stretch reads MSTDGESPEEPGWKAVASPKAS. Topologically, residues 1–51 are extracellular; it reads MSTDGESPEEPGWKAVASPKASAMPEKRGSAQAASSSWLQGFGQPSVYHAA. Residues 52 to 72 traverse the membrane as a helical segment; it reads FVIFFEFFAWGLLTTPMLTVL. At 73–84 the chain is on the cytoplasmic side; the sequence is HETFPQHTFLMN. Residues 85 to 105 traverse the membrane as a helical segment; it reads GLIQGVKGLLSFLSAPLIGAL. The Extracellular segment spans residues 106-113; the sequence is SDVWGRKP. The helical transmembrane segment at 114-134 threads the bilayer; that stretch reads FLLGTVFFTCFPIPLMRISPW. Residues 135–136 lie on the Cytoplasmic side of the membrane; that stretch reads WY. The chain crosses the membrane as a helical span at residues 137-157; it reads FGMISVSGVFSVTFSVIFAYV. At 158-170 the chain is on the extracellular side; that stretch reads ADFTQEHERSTAY. Residues 171 to 191 form a helical membrane-spanning segment; sequence GWVSATFAASLVSSPAIGTYL. At 192–198 the chain is on the cytoplasmic side; sequence SSNYGDS. A helical transmembrane segment spans residues 199-219; that stretch reads LVVLVATVVALLDICFILVAV. At 220-257 the chain is on the extracellular side; sequence PESLPEKIRPASWGAQISWKQADPFASLKKVGKDSTVL. A helical transmembrane segment spans residues 258 to 278; the sequence is LICITVFLSYLPEAGQYSSFF. Residues 279–283 are Cytoplasmic-facing; the sequence is LYLRQ. A helical membrane pass occupies residues 284–304; it reads VIGFGSVKIVAFIAMVGILSI. Residues 305–323 lie on the Extracellular side of the membrane; that stretch reads LAQTVFLSKLMRSLGNKNT. The helical transmembrane segment at 324 to 344 threads the bilayer; that stretch reads VLLGLGFQILQLAWYGFGAQA. The Cytoplasmic segment spans residues 345–347; it reads WMM. Residues 348 to 368 traverse the membrane as a helical segment; the sequence is WAAGTVAAMSSITFPAVSALI. The Extracellular portion of the chain corresponds to 369 to 389; that stretch reads SRNAESDQQGVAQGIITGIRG. A helical transmembrane segment spans residues 390-410; sequence LCNGLGPALYGFIFYLFHVEL. Topologically, residues 411–430 are cytoplasmic; sequence NELGPKLDSDNDPLQGAFIP. The helical transmembrane segment at 431–451 threads the bilayer; the sequence is GPPFLFGACIVLMSFLVALFI. Residues 452–507 lie on the Extracellular side of the membrane; the sequence is PEYRKTGGVQKHNNSISGSLSTPPERGSDEDIEPLLQDSNIWELSSEEPGNQCTEL. The segment covering 462 to 473 has biased composition (polar residues); sequence KHNNSISGSLST. The segment at 462–483 is disordered; sequence KHNNSISGSLSTPPERGSDEDI. A glycan (N-linked (GlcNAc...) asparagine) is linked at asparagine 464.

This sequence belongs to the major facilitator superfamily.

It localises to the membrane. The chain is Hippocampus abundant transcript-like protein 1 from Rattus norvegicus (Rat).